A 574-amino-acid chain; its full sequence is Pre-mRNA-processing protein 45 (574 aa).

Disordered regions lie at residues 1 to 46 (MAAL…WKPK), 203 to 234 (PPRFKHKKIPRGPAEPPPPVLQSPPRAATAQD), 350 to 406 (ETGI…SEMR), 478 to 503 (AGSSRNDESFGGGTEEGIKEEMSKDR), and 549 to 574 (MDAARRGGKRTAEDRDEERRKRARDE). Pro residues-rich tracts occupy residues 24–33 (APLPTTPGPQ) and 215–224 (PAEPPPPVLQ). The segment covering 363-377 (GSEEESDEEEEDEEA) has biased composition (acidic residues). Composition is skewed to basic and acidic residues over residues 378–397 (IRERNIVREEKRREREKEMR), 493–503 (EGIKEEMSKDR), and 558–574 (RTAEDRDEERRKRARDE).

The protein belongs to the SNW family. As to quaternary structure, associated with the spliceosome.

It is found in the nucleus. Its function is as follows. Involved in pre-mRNA splicing. The chain is Pre-mRNA-processing protein 45 (PRP45) from Cryptococcus neoformans var. neoformans serotype D (strain JEC21 / ATCC MYA-565) (Filobasidiella neoformans).